A 728-amino-acid polypeptide reads, in one-letter code: 1,4-alpha-glucan branching enzyme GlgB (728 aa).

D405 serves as the catalytic Nucleophile. Catalysis depends on E458, which acts as the Proton donor.

The protein belongs to the glycosyl hydrolase 13 family. GlgB subfamily. As to quaternary structure, monomer.

The enzyme catalyses Transfers a segment of a (1-&gt;4)-alpha-D-glucan chain to a primary hydroxy group in a similar glucan chain.. It functions in the pathway glycan biosynthesis; glycogen biosynthesis. In terms of biological role, catalyzes the formation of the alpha-1,6-glucosidic linkages in glycogen by scission of a 1,4-alpha-linked oligosaccharide from growing alpha-1,4-glucan chains and the subsequent attachment of the oligosaccharide to the alpha-1,6 position. The chain is 1,4-alpha-glucan branching enzyme GlgB from Salmonella typhi.